Consider the following 1234-residue polypeptide: MSKERPKRNIIQKKYDDSDGIPWSEERVVRKVLYLSLKEFKNAQKRQHGEGLAGSLKAVNGLLGNAQAKALGPASEQSENEKDDASQVSSTSNDVSSSDFEEGPSRKRPRLQAQRKFAQSQPNSPSTTPVKIVEPLLPPPATQISDLSKRKPKTEDFLTFLCLRGSPALPNSMVYFGSSQDEEDVEEEDDETEDVKATTNNASSSCQSTPRKGKTHKHVHNGHVFNGSSRSAREKEPAHKHRSKEATPGKEKHSEPRADSRREQASGAQPTAASAAASSAKGLAANHQPPPSHRSAQDLRKQVSKVNGVTRMSSLGAGTNSAKKIREVRPSPSKTVKYTATVTKGTVTYTKAKRELVKETKPNHHKPSSAVNHTISGKTESSNAKTRKQVLSLGGASKSTGPAASGLKASSRLNPKSCTKEVGGRQLREGLRNSKRRLEEAQQVDKPQSPPKKMKGVAGNAEAPGKKASAASGEKSLLNGHVKKEVPERSLERNRPKRAAAGKNMLGKQAHGKTEGTPCENRSTSQPESSHKPHDPQGKPEKGSGKSGWAAMDEIPVLRPSAKEFHDPLIYIESVRAQVEKYGMCRVIPPPDWRPECKLNDEMRFVTQIQHIHKLGRRWGPNVQRLACIKKHLRSQGITMDELPLIGGCELDLACFFRLINEMGGMQQVTDLKKWNKLADMLRIPKTAQDRLAKLQEAYCQYLLSYDSLSPEEHRRLEKEVLMEKEILEKRKGPLEGHTESDHHKFHSLPRFEPKNGLVHGVTPRNGFRSKLKEVGRAPLKTGRRRLFAQEKEVVKEEEEDKGVLNDFHKCIYKGRSVSLTTFYRTARNIMNMCFSKEPAPAEIEQEYWRLVEEKDCHVAVHCGKVDTNTHGSGFPVGKSEPFSRHGWNLTVLPNNTGSILRHLGAVPGVTIPWLNIGMVFSTSCWSRDQNHLPYIDYLHTGADCIWYCIPAEEENKLEDVVHTLLQGNGTPGLQMLESNVMISPEVLCKKGIKVHRTVQQSGQFVVCFPGSFVSKVCCGYNVSETVHFATTQWTSMGFETAKEMKRRHIAKPFSMEKLLYQIAQAEAKKENGPTLSTISALLDELRDTELRQRRLLFEAGLHSSARYGSHDGNSTVADGKKKPRKWLQLETSERRCQICQHLCYLSMVVQENENVVFCLECALRHVEKQKSCRGLKLMYRYDEEQIISLVNQICGKVSGKHGGIENCLNKPTPKRGPRKRATVDVPPSRLPSS.

A compositionally biased stretch (basic residues) spans 1–11 (MSKERPKRNII). Disordered stretches follow at residues 1-22 (MSKE…DGIP), 68-150 (AKAL…LSKR), 169-339 (LPNS…VKYT), and 354-548 (RELV…GKSG). Position 78 is a phosphoserine (S78). Residues 86–98 (SQVSSTSNDVSSS) show a composition bias toward low complexity. Positions 104–110 (PSRKRPR) match the Nuclear localization signal motif. The segment covering 117 to 129 (FAQSQPNSPSTTP) has biased composition (polar residues). Positions 141–170 (ATQISDLSKRKPKTEDFLTFLCLRGSPALP) are sufficient for interaction with the PRC2 complex. The span at 180 to 193 (QDEEDVEEEDDETE) shows a compositional bias: acidic residues. Positions 197–210 (ATTNNASSSCQSTP) are enriched in polar residues. Basic residues predominate over residues 211–221 (RKGKTHKHVHN). A compositionally biased stretch (basic and acidic residues) spans 244 to 264 (KEATPGKEKHSEPRADSRREQ). The span at 265-285 (ASGAQPTAASAAASSAKGLAA) shows a compositional bias: low complexity. 2 stretches are compositionally biased toward polar residues: residues 304–322 (SKVN…TNSA) and 369–384 (SAVN…SSNA). K378 bears the N6-acetyllysine mark. Basic and acidic residues predominate over residues 418 to 440 (CTKEVGGRQLREGLRNSKRRLEE). At S449 the chain carries Phosphoserine. 2 stretches are compositionally biased toward basic and acidic residues: residues 482–494 (VKKE…LERN) and 529–544 (SSHK…EKGS). A JmjN domain is found at 555–596 (IPVLRPSAKEFHDPLIYIESVRAQVEKYGMCRVIPPPDWRPE). The region spanning 619 to 711 (WGPNVQRLAC…YLLSYDSLSP (93 aa)) is the ARID domain. Residues 872–876 (GSGFP) carry the GSGFP motif motif. Residues 882–1046 (PFSRHGWNLT…MGFETAKEMK (165 aa)) form the JmjC domain. Positions 1206–1234 (ENCLNKPTPKRGPRKRATVDVPPSRLPSS) are disordered.

The protein belongs to the JARID2 family. Associates with the PRC2 complex, which consists of the core components EED, EZH1 or EZH2, SUZ12, and RBBP4, and various combinations of accessory subunits including AEBP2, JARID2, PHF19, MTF2 and EPOP. Found in a monomeric PRC2.2 (class 2) complex consisting of at least SUZ12, RBBP4, AEBP2 and JARID2. Facilitates nucleosome binding of the PRC2 complex. Interacts with SUZ12 (via C2H2-type zinc finger domain); the interaction is direct; competes with EPOP for SUZ12 binding. Interacts with histone methyltransferases EHMT1/GLP1 and EHMT2/G9a. Interacts with GATA4 (via the N-terminal region). Interacts with NKX2-5 (via the C-terminal region). Interacts with RB1. Interacts with ZNF496. Interacts with ESRRB. Interacts with DDX18; this interaction inhibits the PRC2 complex. In terms of tissue distribution, widely expressed in embryos. In adults, expressed at high levels in heart, skeletal muscle, brain and thymus.

It is found in the nucleus. In terms of biological role, regulator of histone methyltransferase complexes that plays an essential role in embryonic development, including heart and liver development, neural tube fusion process and hematopoiesis. Acts as an accessory subunit for the core PRC2 (Polycomb repressive complex 2) complex, which mediates histone H3K27 (H3K27me3) trimethylation on chromatin. Binds DNA and mediates the recruitment of the PRC2 complex to target genes in embryonic stem cells, thereby playing a key role in stem cell differentiation and normal embryonic development. In cardiac cells, it is required to repress expression of cyclin-D1 (CCND1) by activating methylation of 'Lys-9' of histone H3 (H3K9me) by the GLP1/EHMT1 and G9a/EHMT2 histone methyltransferases. Also acts as a transcriptional repressor of ANF via its interaction with GATA4 and NKX2-5. Participates in the negative regulation of cell proliferation signaling. Does not have histone demethylase activity. This is Protein Jumonji (Jarid2) from Mus musculus (Mouse).